A 204-amino-acid polypeptide reads, in one-letter code: tRNA (pseudouridine(54)-N(1))-methyltransferase (204 aa).

S-adenosyl-L-methionine contacts are provided by residues Leu-130, Gly-157, 180–185 (LSPLEL), and Cys-190.

The protein belongs to the methyltransferase superfamily. TrmY family. Homodimer.

Its subcellular location is the cytoplasm. It catalyses the reaction pseudouridine(54) in tRNA + S-adenosyl-L-methionine = N(1)-methylpseudouridine(54) in tRNA + S-adenosyl-L-homocysteine + H(+). In terms of biological role, specifically catalyzes the N1-methylation of pseudouridine at position 54 (Psi54) in tRNAs. The chain is tRNA (pseudouridine(54)-N(1))-methyltransferase from Methanococcus aeolicus (strain ATCC BAA-1280 / DSM 17508 / OCM 812 / Nankai-3).